The following is a 1761-amino-acid chain: Lysine-specific demethylase 3B (1761 aa).

Position 2 is an N-acetylalanine (A2). The tract at residues 253–346 (DNSAPQSEGG…QRAKQPPSTF (94 aa)) is disordered. Residues 298 to 309 (ASKKLKGDRGEV) show a composition bias toward basic and acidic residues. K361 is modified (N6-acetyllysine). Disordered stretches follow at residues 370-394 (QDEP…QTPL) and 438-496 (DTGL…NGVL). Composition is skewed to polar residues over residues 380–392 (ASFT…TGQT), 453–468 (SRSQ…SILA), and 477–495 (PSSS…SNGV). 4 positions are modified to phosphoserine: S492, S546, S556, and S560. The segment at 572-603 (RSVLGTDTKPGSKAGSSVDRKVPAESMPTLTP) is disordered. Position 614 is a phosphothreonine (T614). Residues 714–762 (GPSLSAMGNGRSSSPTSSLTQPIEMPTLSSSPTEERPTVGPGQQDNPLL) are disordered. Over residues 723–745 (GRSSSPTSSLTQPIEMPTLSSSP) the composition is skewed to polar residues. A phosphoserine mark is found at S766, S773, S778, and S779. K788 participates in a covalent cross-link: Glycyl lysine isopeptide (Lys-Gly) (interchain with G-Cter in SUMO2). S798 carries the post-translational modification Phosphoserine. The disordered stretch occupies residues 805-827 (ACRQDSDSSTNSDLSDLSDSEEQ). The C6-type zinc-finger motif lies at 1031–1056 (CDVCETTLFNIHWVCRKCGFGVCLDC). Polar residues predominate over residues 1142–1161 (GMSQLPSINPSASSGNETTF). The segment at 1142 to 1220 (GMSQLPSINP…PCPDTAPPSS (79 aa)) is disordered. Positions 1174-1193 (EPDHVPKADSTDIRSEEPLK) are enriched in basic and acidic residues. A compositionally biased stretch (polar residues) spans 1194-1204 (TDSSASNSNSE). S1253 and S1259 each carry phosphoserine. An LXXLL motif motif is present at residues 1293–1297 (LRDLL). The JmjC domain maps to 1498 to 1721 (MPTRFEDLME…HCFRLTQEFR (224 aa)). 3 residues coordinate Fe cation: H1560, D1562, and H1689.

The protein belongs to the JHDM2 histone demethylase family. Requires Fe(2+) as cofactor. As to expression, ubiquitous. Highly expressed in placenta, skeletal muscle, kidney, heart and liver.

The protein localises to the nucleus. It carries out the reaction N(6),N(6)-dimethyl-L-lysyl(9)-[histone H3] + 2 2-oxoglutarate + 2 O2 = L-lysyl(9)-[histone H3] + 2 formaldehyde + 2 succinate + 2 CO2. Its function is as follows. Histone demethylase that specifically demethylates 'Lys-9' of histone H3, thereby playing a central role in histone code. Demethylation of Lys residue generates formaldehyde and succinate. May have tumor suppressor activity. The protein is Lysine-specific demethylase 3B (KDM3B) of Homo sapiens (Human).